We begin with the raw amino-acid sequence, 191 residues long: Elongation factor P (191 aa).

Lys34 is subject to N6-(3,6-diaminohexanoyl)-5-hydroxylysine.

The protein belongs to the elongation factor P family. In terms of processing, may be beta-lysylated on the epsilon-amino group of Lys-34 by the combined action of EpmA and EpmB, and then hydroxylated on the C5 position of the same residue by EpmC (if this protein is present). Lysylation is critical for the stimulatory effect of EF-P on peptide-bond formation. The lysylation moiety may extend toward the peptidyltransferase center and stabilize the terminal 3-CCA end of the tRNA. Hydroxylation of the C5 position on Lys-34 may allow additional potential stabilizing hydrogen-bond interactions with the P-tRNA.

The protein localises to the cytoplasm. The protein operates within protein biosynthesis; polypeptide chain elongation. Involved in peptide bond synthesis. Alleviates ribosome stalling that occurs when 3 or more consecutive Pro residues or the sequence PPG is present in a protein, possibly by augmenting the peptidyl transferase activity of the ribosome. Modification of Lys-34 is required for alleviation. This Marinomonas sp. (strain MWYL1) protein is Elongation factor P.